An 874-amino-acid polypeptide reads, in one-letter code: Probable inorganic carbon transporter subunit DabA (874 aa).

Zn(2+) contacts are provided by cysteine 398, aspartate 400, histidine 580, and cysteine 595.

It belongs to the inorganic carbon transporter (TC 9.A.2) DabA family. As to quaternary structure, forms a complex with DabB. The cofactor is Zn(2+).

The protein localises to the cell membrane. Part of an energy-coupled inorganic carbon pump. The protein is Probable inorganic carbon transporter subunit DabA of Bacillus thuringiensis subsp. konkukian (strain 97-27).